The following is a 182-amino-acid chain: Gremlin-1 (182 aa).

A signal peptide spans 1–24; that stretch reads MNCLVYALGSLFLLSGLLLPSSEG. The segment at 23–65 is disordered; that stretch reads EGKKKVSGSQGAIPPPDKGQPNDSEQGQAQPGDRVRGKGKGQA. An N-linked (GlcNAc...) asparagine glycan is attached at Asn-44. 4 disulfide bridges follow: Cys-92–Cys-142, Cys-106–Cys-156, Cys-116–Cys-174, and Cys-120–Cys-176. In terms of domain architecture, CTCK spans 92 to 182; the sequence is CKTQPLKQTI…QCRCISIDLD (91 aa).

This sequence belongs to the DAN family.

It is found in the secreted. Its function is as follows. Cytokine that has an axial patterning activity. Acts like BMP antagonist in embryonic explants. Blocks the BMP2 activity. The protein is Gremlin-1 (grem1) of Xenopus laevis (African clawed frog).